The chain runs to 26 residues: Toxin TdII-1 (26 aa).

The protein belongs to the long (4 C-C) scorpion toxin superfamily. Sodium channel inhibitor family. Beta subfamily. Expressed by the venom gland.

It localises to the secreted. In terms of biological role, beta toxins bind voltage-independently at site-4 of sodium channels (Nav) and shift the voltage of activation toward more negative potentials thereby affecting sodium channel activation and promoting spontaneous and repetitive firing. This toxin is active against mammals and crustaceans. The polypeptide is Toxin TdII-1 (Tityus discrepans (Venezuelan scorpion)).